The following is a 723-amino-acid chain: ESX-1 secretion-associated protein EspK (723 aa).

2 disordered regions span residues 175–360 (DLLQ…TPAA) and 393–451 (SGAG…GTPV). The segment covering 200–209 (TPGTPITPGT) has biased composition (low complexity). A compositionally biased stretch (pro residues) spans 210–229 (PITPIPGAPVTPITPTPGTP). Residues 230 to 249 (VTPVTPGKPVTPVTPVKPGT) show a composition bias toward low complexity. 2 stretches are compositionally biased toward pro residues: residues 250-265 (PGEP…PVAP) and 274-308 (PVTP…PSGP). Low complexity-rich tracts occupy residues 309-319 (ATPGTPGGEPA), 393-404 (SGAGSHAATGRA), and 412-426 (AAAP…RTAP). A compositionally biased stretch (basic and acidic residues) spans 432–444 (STDHIDKPDRSES).

The protein localises to the cytoplasm. May act as a chaperone that facilitates EspB secretion through an interaction with EccCb1. This is ESX-1 secretion-associated protein EspK from Mycobacterium tuberculosis (strain CDC 1551 / Oshkosh).